Here is a 64-residue protein sequence, read N- to C-terminus: Myotoxin-2 (64 aa).

A signal peptide spans 1–21 (KILYLLFAFLFLAFLSEPGNA). A disulfide bridge connects residues Cys32 and Cys51.

It belongs to the crotamine-myotoxin family. As to quaternary structure, monomer. As to expression, expressed by the venom gland.

The protein resides in the secreted. In terms of biological role, cationic peptide that possesses multiple functions. It acts as a cell-penetrating peptide (CPP), and as a potent voltage-gated potassium channel (Kv) inhibitor. It exhibits antimicrobial activities, hind limb paralysis, and severe muscle necrosis by a non-enzymatic mechanism. In Crotalus durissus terrificus (South American rattlesnake), this protein is Myotoxin-2.